The sequence spans 556 residues: Membrane protein insertase YidC (556 aa).

A helical transmembrane segment spans residues 7–27 (ILLVALAVVAYLMVLQWNQDY). Disordered regions lie at residues 35–59 (ETAQSQPAAPALPDSPSATTEGNAN) and 126–152 (SSERTYEAQSGLIGDGPDKASGRPQYS). Low complexity predominate over residues 36–54 (TAQSQPAAPALPDSPSATT). Helical transmembrane passes span 365–385 (LLGNWGWSIIVLTIVIKLAFF), 435–455 (LGGCLPILVQMPVFLALYWVL), 468–488 (FWITDLSIKDPYFILPIIMGV), and 513–533 (PIIFTFFFLWFPAGLVLYWVV).

It belongs to the OXA1/ALB3/YidC family. Type 1 subfamily. As to quaternary structure, interacts with the Sec translocase complex via SecD. Specifically interacts with transmembrane segments of nascent integral membrane proteins during membrane integration.

Its subcellular location is the cell inner membrane. Required for the insertion and/or proper folding and/or complex formation of integral membrane proteins into the membrane. Involved in integration of membrane proteins that insert both dependently and independently of the Sec translocase complex, as well as at least some lipoproteins. Aids folding of multispanning membrane proteins. This chain is Membrane protein insertase YidC, found in Stutzerimonas stutzeri (strain A1501) (Pseudomonas stutzeri).